Here is a 162-residue protein sequence, read N- to C-terminus: Protein-export protein SecB (162 aa).

This sequence belongs to the SecB family. Homotetramer, a dimer of dimers. One homotetramer interacts with 1 SecA dimer.

The protein localises to the cytoplasm. In terms of biological role, one of the proteins required for the normal export of preproteins out of the cell cytoplasm. It is a molecular chaperone that binds to a subset of precursor proteins, maintaining them in a translocation-competent state. It also specifically binds to its receptor SecA. The sequence is that of Protein-export protein SecB from Bradyrhizobium sp. (strain BTAi1 / ATCC BAA-1182).